The following is a 255-amino-acid chain: Small ribosomal subunit protein eS4 (255 aa).

Residues 44–107 (IPLLILVRDV…DEYYRMIPYP (64 aa)) enclose the S4 RNA-binding domain.

The protein belongs to the eukaryotic ribosomal protein eS4 family.

This chain is Small ribosomal subunit protein eS4, found in Ignicoccus hospitalis (strain KIN4/I / DSM 18386 / JCM 14125).